A 372-amino-acid polypeptide reads, in one-letter code: Putative 26S proteasome regulatory subunit homolog MTBMA_c13930 (372 aa).

ATP is bound at residue 164 to 171; the sequence is GSPGTGKT.

It belongs to the AAA ATPase family.

Functionally, the 26S proteasome is involved in the ATP-dependent degradation of ubiquitinated proteins. The regulatory (or ATPase) complex confers ATP dependency and substrate specificity to the 26S complex. In Methanothermobacter marburgensis (strain ATCC BAA-927 / DSM 2133 / JCM 14651 / NBRC 100331 / OCM 82 / Marburg) (Methanobacterium thermoautotrophicum), this protein is Putative 26S proteasome regulatory subunit homolog MTBMA_c13930.